Reading from the N-terminus, the 340-residue chain is Phosphate carrier protein, mitochondrial (340 aa).

A mitochondrion-targeting transit peptide spans Met-1–Ser-27. Solcar repeat units follow at residues Lys-41–Val-125, Tyr-138–Ala-222, and Glu-239–Ala-317. 6 helical membrane passes run Ala-47 to Val-67, Arg-95 to Gly-114, Ser-141 to Met-161, Pro-200 to Val-220, Leu-241 to Pro-261, and Ile-297 to Ala-317.

Belongs to the mitochondrial carrier (TC 2.A.29) family.

It is found in the mitochondrion inner membrane. In terms of biological role, transport of phosphate groups from the cytosol to the mitochondrial matrix. This is Phosphate carrier protein, mitochondrial from Caenorhabditis elegans.